The primary structure comprises 86 residues: UPF0297 protein LCABL_08470 (86 aa).

This sequence belongs to the UPF0297 family.

The polypeptide is UPF0297 protein LCABL_08470 (Lacticaseibacillus casei (strain BL23) (Lactobacillus casei)).